A 280-amino-acid chain; its full sequence is Large ribosomal subunit protein uL2 (280 aa).

2 disordered regions span residues methionine 1–threonine 25 and histidine 230–glycine 280. Positions lysine 257–glycine 280 are enriched in basic residues.

It belongs to the universal ribosomal protein uL2 family. In terms of assembly, part of the 50S ribosomal subunit. Forms a bridge to the 30S subunit in the 70S ribosome.

Functionally, one of the primary rRNA binding proteins. Required for association of the 30S and 50S subunits to form the 70S ribosome, for tRNA binding and peptide bond formation. It has been suggested to have peptidyltransferase activity; this is somewhat controversial. Makes several contacts with the 16S rRNA in the 70S ribosome. This Gloeobacter violaceus (strain ATCC 29082 / PCC 7421) protein is Large ribosomal subunit protein uL2.